Reading from the N-terminus, the 520-residue chain is ATP synthase subunit alpha 2 (520 aa).

176–183 (GDRQTGKT) is an ATP binding site.

The protein belongs to the ATPase alpha/beta chains family. In terms of assembly, F-type ATPases have 2 components, CF(1) - the catalytic core - and CF(0) - the membrane proton channel. CF(1) has five subunits: alpha(3), beta(3), gamma(1), delta(1), epsilon(1). CF(0) has three main subunits: a(1), b(2) and c(9-12). The alpha and beta chains form an alternating ring which encloses part of the gamma chain. CF(1) is attached to CF(0) by a central stalk formed by the gamma and epsilon chains, while a peripheral stalk is formed by the delta and b chains.

Its subcellular location is the cell inner membrane. The catalysed reaction is ATP + H2O + 4 H(+)(in) = ADP + phosphate + 5 H(+)(out). Produces ATP from ADP in the presence of a proton gradient across the membrane. The alpha chain is a regulatory subunit. The sequence is that of ATP synthase subunit alpha 2 from Polaromonas naphthalenivorans (strain CJ2).